The following is a 336-amino-acid chain: NADH-quinone oxidoreductase subunit H (336 aa).

8 consecutive transmembrane segments (helical) span residues 14–34 (IIVA…AFLV), 82–102 (IIFL…WAVI), 115–135 (VGIL…IMAG), 161–181 (IGLV…SDVV), 186–206 (TVWF…SALA), 247–267 (ILMS…PLDV), 273–293 (VPGP…FVWV), and 312–332 (VFLP…VTFD).

This sequence belongs to the complex I subunit 1 family. NDH-1 is composed of 14 different subunits. Subunits NuoA, H, J, K, L, M, N constitute the membrane sector of the complex.

Its subcellular location is the cell inner membrane. The catalysed reaction is a quinone + NADH + 5 H(+)(in) = a quinol + NAD(+) + 4 H(+)(out). NDH-1 shuttles electrons from NADH, via FMN and iron-sulfur (Fe-S) centers, to quinones in the respiratory chain. The immediate electron acceptor for the enzyme in this species is believed to be ubiquinone. Couples the redox reaction to proton translocation (for every two electrons transferred, four hydrogen ions are translocated across the cytoplasmic membrane), and thus conserves the redox energy in a proton gradient. This subunit may bind ubiquinone. The polypeptide is NADH-quinone oxidoreductase subunit H (Rhodospirillum centenum (strain ATCC 51521 / SW)).